We begin with the raw amino-acid sequence, 443 residues long: tRNA-2-methylthio-N(6)-dimethylallyladenosine synthase (443 aa).

One can recognise an MTTase N-terminal domain in the interval 3-120 (SKLYIKTFGC…LPELIDARRR (118 aa)). Residues cysteine 12, cysteine 49, cysteine 83, cysteine 157, cysteine 161, and cysteine 164 each coordinate [4Fe-4S] cluster. The region spanning 143 to 377 (RTTGATAFVS…KIQRNAQMIS (235 aa)) is the Radical SAM core domain. Positions 378–441 (QSMVDTIQRV…SHTLRGEISD (64 aa)) constitute a TRAM domain.

Belongs to the methylthiotransferase family. MiaB subfamily. As to quaternary structure, monomer. [4Fe-4S] cluster serves as cofactor.

It localises to the cytoplasm. The enzyme catalyses N(6)-dimethylallyladenosine(37) in tRNA + (sulfur carrier)-SH + AH2 + 2 S-adenosyl-L-methionine = 2-methylsulfanyl-N(6)-dimethylallyladenosine(37) in tRNA + (sulfur carrier)-H + 5'-deoxyadenosine + L-methionine + A + S-adenosyl-L-homocysteine + 2 H(+). In terms of biological role, catalyzes the methylthiolation of N6-(dimethylallyl)adenosine (i(6)A), leading to the formation of 2-methylthio-N6-(dimethylallyl)adenosine (ms(2)i(6)A) at position 37 in tRNAs that read codons beginning with uridine. The chain is tRNA-2-methylthio-N(6)-dimethylallyladenosine synthase from Nitrosomonas eutropha (strain DSM 101675 / C91 / Nm57).